Here is a 62-residue protein sequence, read N- to C-terminus: Overexpressed in colon carcinoma 1 protein homolog (62 aa).

The segment covering 1–16 (MGCGNSTAGGAGGRGA) has biased composition (gly residues). Positions 1–62 (MGCGNSTAGG…SGQTKAAPKD (62 aa)) are disordered.

Belongs to the OCC1 family.

This is Overexpressed in colon carcinoma 1 protein homolog from Gallus gallus (Chicken).